Here is a 357-residue protein sequence, read N- to C-terminus: Phosphoribosylformylglycinamidine cyclo-ligase (357 aa).

This sequence belongs to the AIR synthase family.

Its subcellular location is the cytoplasm. It catalyses the reaction 2-formamido-N(1)-(5-O-phospho-beta-D-ribosyl)acetamidine + ATP = 5-amino-1-(5-phospho-beta-D-ribosyl)imidazole + ADP + phosphate + H(+). The protein operates within purine metabolism; IMP biosynthesis via de novo pathway; 5-amino-1-(5-phospho-D-ribosyl)imidazole from N(2)-formyl-N(1)-(5-phospho-D-ribosyl)glycinamide: step 2/2. The polypeptide is Phosphoribosylformylglycinamidine cyclo-ligase (Agrobacterium fabrum (strain C58 / ATCC 33970) (Agrobacterium tumefaciens (strain C58))).